Reading from the N-terminus, the 357-residue chain is UDP-N-acetylglucosamine--N-acetylmuramyl-(pentapeptide) pyrophosphoryl-undecaprenol N-acetylglucosamine transferase (357 aa).

Residues 14 to 16 (TAG), Arg168, Ser198, and Gln292 contribute to the UDP-N-acetyl-alpha-D-glucosamine site.

The protein belongs to the glycosyltransferase 28 family. MurG subfamily.

Its subcellular location is the cell membrane. It carries out the reaction di-trans,octa-cis-undecaprenyl diphospho-N-acetyl-alpha-D-muramoyl-L-alanyl-D-glutamyl-meso-2,6-diaminopimeloyl-D-alanyl-D-alanine + UDP-N-acetyl-alpha-D-glucosamine = di-trans,octa-cis-undecaprenyl diphospho-[N-acetyl-alpha-D-glucosaminyl-(1-&gt;4)]-N-acetyl-alpha-D-muramoyl-L-alanyl-D-glutamyl-meso-2,6-diaminopimeloyl-D-alanyl-D-alanine + UDP + H(+). The protein operates within cell wall biogenesis; peptidoglycan biosynthesis. Its function is as follows. Cell wall formation. Catalyzes the transfer of a GlcNAc subunit on undecaprenyl-pyrophosphoryl-MurNAc-pentapeptide (lipid intermediate I) to form undecaprenyl-pyrophosphoryl-MurNAc-(pentapeptide)GlcNAc (lipid intermediate II). The chain is UDP-N-acetylglucosamine--N-acetylmuramyl-(pentapeptide) pyrophosphoryl-undecaprenol N-acetylglucosamine transferase from Oceanobacillus iheyensis (strain DSM 14371 / CIP 107618 / JCM 11309 / KCTC 3954 / HTE831).